Consider the following 396-residue polypeptide: Adenosine 3'-phospho 5'-phosphosulfate transporter 2 (396 aa).

Residues 22 to 42 (NGGESAGNSPPSQRKSSTSES) form a disordered region. Positions 27–42 (AGNSPPSQRKSSTSES) are enriched in polar residues. 2 positions are modified to phosphoserine: Ser37 and Ser40. Residue Asn57 is glycosylated (N-linked (GlcNAc...) asparagine). The next 10 helical transmembrane spans lie at 66–86 (CAGVFFLYILYGYLQELIFTV), 91–111 (PYGWFLTLVQFGYYIGFGLVE), 140–160 (LILAALTLGTMGLSNSSLGYL), 163–183 (PTQVIFKCCKLIPVLVGSILI), 189–209 (GLLDFAAATCMCIGLAWFTLA), 216–236 (NFNLLGVAMISGALLCDAAIG), 253–273 (VVFYSYGLGFVYLFVIMLVTG), 290–310 (FGYGFLFSLSGYLGIQFVLAL), 318–338 (IAATVTTARKAVTIAFSFVLF), and 342–362 (FTLQYLWSGLIVVLGIYLNVY).

The protein belongs to the nucleotide-sugar transporter family. SLC35B subfamily.

It is found in the golgi apparatus membrane. In terms of biological role, mediates the transport of adenosine 3'-phospho 5'-phosphosulfate (PAPS), from cytosol into Golgi. PAPS is a universal sulfuryl donor for sulfation events that take place in the Golgi. Essential for viability. Involved in glycosaminoglycan synthesis and the subsequent signaling. May be involved in hh and dpp signaling by controlling the sulfation of heparan sulfate (HS). In Drosophila melanogaster (Fruit fly), this protein is Adenosine 3'-phospho 5'-phosphosulfate transporter 2 (Papst2).